A 221-amino-acid chain; its full sequence is Deoxyribose-phosphate aldolase (221 aa).

The active-site Proton donor/acceptor is the Asp96. The active-site Schiff-base intermediate with acetaldehyde is the Lys157. Lys185 acts as the Proton donor/acceptor in catalysis.

It belongs to the DeoC/FbaB aldolase family. DeoC type 1 subfamily.

It localises to the cytoplasm. It carries out the reaction 2-deoxy-D-ribose 5-phosphate = D-glyceraldehyde 3-phosphate + acetaldehyde. Its pathway is carbohydrate degradation; 2-deoxy-D-ribose 1-phosphate degradation; D-glyceraldehyde 3-phosphate and acetaldehyde from 2-deoxy-alpha-D-ribose 1-phosphate: step 2/2. Functionally, catalyzes a reversible aldol reaction between acetaldehyde and D-glyceraldehyde 3-phosphate to generate 2-deoxy-D-ribose 5-phosphate. The polypeptide is Deoxyribose-phosphate aldolase (Crocosphaera subtropica (strain ATCC 51142 / BH68) (Cyanothece sp. (strain ATCC 51142))).